Reading from the N-terminus, the 739-residue chain is MSGLFGILSPAKRVNGDGLPLFYNIHKSVELQRCHRDTARVSVTLAELLMSVEDEGDDQSRAMDIAVASNFWSSVPSSRVPSSSPFVLSFKDLTYSVKIKKKFKPFPCCGNSPFDGNDMEMNTKVLLNGISGEAREGEMMAVLGASGSGKSTLIDALANRISKESLRGDITLNGEVLESSLHKVISAYVMQDDLLFPMLTVEETLMFSAEFRLPSSLSKKKKKARVQALIDQLGLRNAAKTVIGDEGHRGVSGGERRRVSIGTDIIHDPIILFLDEPTSGLDSTSAYMVVKVLQRIAQSGSIVIMSIHQPSYRILGLLDKLIFLSRGNTVYSGSPTHLPQFFSEFGHPIPENENKPEFALDLIRELEDSPEGTKSLVEFHKQWRAKQTSSQSRRNTNVSLKDAISASISRGKLVSGATNLRSSFQTFANPFWTEMLVIGKRSILNSRRQPELFGIRLGAVLVTGMILATIFWKLDNSPRGIQERLGFFAFAMSTTFYTCAEAIPVFLQERYIFMRETAYNAYRRSSYVLAHTIISIPALIILSAAFAASTFSAVGLAGGSEGFLFFFFTILTAFWAGSSFVTFLSGVVSHVMIGFTVVVAILAYFLLFSGFFISRDRIPLYWIWFHYLSLVKYPYEGVLQNEFEDPTKCFVRGIQMFDNSPLGQVPTAVKISLLKSMSGVLGINVTAETCVTTGIDILKQQGITEISKWNCLWITVAWGFFFRVLFYFTLLIGSKNKRR.

Positions 88–351 constitute an ABC transporter domain; sequence LSFKDLTYSV…FSEFGHPIPE (264 aa). Residue 144–151 participates in ATP binding; sequence GASGSGKS. The 211-residue stretch at 433–643 folds into the ABC transmembrane type-2 domain; sequence TEMLVIGKRS…PYEGVLQNEF (211 aa). 6 consecutive transmembrane segments (helical) span residues 452–472, 487–507, 528–548, 563–583, 593–613, and 712–732; these read LFGI…TIFW, FFAF…PVFL, VLAH…AFAA, FLFF…FVTF, IGFT…GFFI, and LWIT…TLLI.

The protein belongs to the ABC transporter superfamily. ABCG family. Eye pigment precursor importer (TC 3.A.1.204) subfamily.

It is found in the membrane. The sequence is that of ABC transporter G family member 20 (ABCG20) from Arabidopsis thaliana (Mouse-ear cress).